A 914-amino-acid polypeptide reads, in one-letter code: UPF0182 protein PTH_1387 (914 aa).

The next 7 membrane-spanning stretches (helical) occupy residues 7–27, 48–68, 109–129, 173–193, 209–229, 252–272, and 281–301; these read FAAY…IAGA, IIIS…VLLF, LLLL…NFTV, INWV…VVYF, YHFS…YQLE, TLLA…AILI, and LVIY…GIYP.

The protein belongs to the UPF0182 family.

Its subcellular location is the cell membrane. In Pelotomaculum thermopropionicum (strain DSM 13744 / JCM 10971 / SI), this protein is UPF0182 protein PTH_1387.